Here is a 619-residue protein sequence, read N- to C-terminus: N-acetylmuramoyl-L-alanine amidase domain-containing protein SAOUHSC_02979 (619 aa).

The signal sequence occupies residues 1 to 27 (MPKNKILIYLLSTTLVLPTLVSPTAYA). Disordered stretches follow at residues 25–83 (AYAD…TIDD), 134–226 (SDYE…SMSD), and 238–290 (EDAK…NQKD). Basic and acidic residues-rich tracts occupy residues 30-65 (PQKDTTAKTTSHDSKKSNDDETSKDTTSKDIDKADK), 73-82 (NNDKKFKTID), and 137-146 (EQPRNGEKST). Low complexity predominate over residues 147–156 (NDSNKNSDNS). Residues 157–175 (IKNDTDTQSSKQDKADNQK) are compositionally biased toward basic and acidic residues. The segment covering 176 to 192 (APKSNNTKPSTSNKQPN) has biased composition (polar residues). The span at 214-226 (QKSSSKDNQSMSD) shows a compositional bias: low complexity. Positions 238 to 260 (EDAKKTQKDYASQSKKDKNEKSN) are enriched in basic and acidic residues. An N-acetylmuramoyl-L-alanine amidase region spans residues 327 to 468 (IAKDAHRIGQ…LNSIIKHYQL (142 aa)). The region spanning 488-617 (DYDDSSDEFK…AAAEELSYIT (130 aa)) is the Peptidase C51 domain.

It in the N-terminal section; belongs to the N-acetylmuramoyl-L-alanine amidase 2 family.

It localises to the secreted. The chain is N-acetylmuramoyl-L-alanine amidase domain-containing protein SAOUHSC_02979 from Staphylococcus aureus (strain NCTC 8325 / PS 47).